A 314-amino-acid polypeptide reads, in one-letter code: DNA-directed RNA polymerase subunit alpha (314 aa).

An alpha N-terminal domain (alpha-NTD) region spans residues 1–228 (MIEFEKPNIH…EHLAMFVDLT (228 aa)). Residues 245–314 (KEKMLEMTIE…DLGVSFRQDD (70 aa)) are alpha C-terminal domain (alpha-CTD).

Belongs to the RNA polymerase alpha chain family. As to quaternary structure, homodimer. The RNAP catalytic core consists of 2 alpha, 1 beta, 1 beta' and 1 omega subunit. When a sigma factor is associated with the core the holoenzyme is formed, which can initiate transcription.

It carries out the reaction RNA(n) + a ribonucleoside 5'-triphosphate = RNA(n+1) + diphosphate. Its function is as follows. DNA-dependent RNA polymerase catalyzes the transcription of DNA into RNA using the four ribonucleoside triphosphates as substrates. The polypeptide is DNA-directed RNA polymerase subunit alpha (Limosilactobacillus reuteri (strain DSM 20016) (Lactobacillus reuteri)).